Reading from the N-terminus, the 147-residue chain is CLAVATA3/ESR (CLE)-related protein 4C (147 aa).

Residues 1–21 form the signal peptide; the sequence is MATNTMLCLFVISVVLALAFA. A required for secretion from the host cytoplasm to the host apoplasm region spans residues 21 to 83; that stretch reads ATNKKGDEEP…SNQLPNNNWM (63 aa). N32 carries an N-linked (GlcNAc...) asparagine glycan. Disordered regions lie at residues 57–86 and 116–147; these read GADA…MAPP and RKTG…PIHH. The span at 125–137 shows a compositional bias: basic and acidic residues; that stretch reads HHEETTLEQEKRV. The CLE signature appears at 136 to 147; that stretch reads RVAGAGPDPIHH.

Belongs to the CLV3/ESR signal peptide family. In terms of tissue distribution, highly expressed exclusively within the dorsal esophageal gland cell during syncytium formation in host plants.

It localises to the secreted. The protein resides in the host cytoplasm. It is found in the host extracellular space. Its subcellular location is the extracellular space. The protein localises to the apoplast. Functionally, mimics host plant CLE extracellular signal peptides that regulate cell fate. May play a role in the differentiation or division of feeding cells (syncytia) induced in plant roots during infection. The sequence is that of CLAVATA3/ESR (CLE)-related protein 4C (CLE-4C) from Globodera rostochiensis (Golden nematode worm).